A 106-amino-acid chain; its full sequence is MGYVIMTFSSARMSERRARIIYIWMHLSAYKINFPFVQFPTFFSLFRLQKKAAILIKNPSPFFLFFLFPYRKNSTARTIHQINQAVALVLLCVSHHLTYLPSVPSL.

The helical transmembrane segment at 85-101 (AVALVLLCVSHHLTYLP) threads the bilayer.

It is found in the membrane. This is an uncharacterized protein from Saccharomyces cerevisiae (strain ATCC 204508 / S288c) (Baker's yeast).